A 359-amino-acid polypeptide reads, in one-letter code: MIAAQAKLVYQLNKYYSERCQARKGAIAKTIREVCKVVSDVLKEVEVQEPRFISSLTEIDARYEGLEVVCPTEFEVVLYLNQMGVFNFVDDGSLPGCAVLKLSDGRKRSMSLWVEFITASGYLSARKIRSRFQTLVAQAVDKCSYRDVVKMIADTSEVKLRIRERYIVQITPAFKCTGIWPRSAAQWPLPHIPWPGPNRVAEVKAEGFNLLSKECYSLTGKQSSAESDAWVLQFAEAENRLLLGGCRGKCLSVLKTLRDRHLELPGQPLNNYHMKTLLLYECEKHPRETDWDEACLGDRLNGILLQLISCLQCRRCPHYFLPNLDLFQGKPHSALESAAKQTWRLAREILTNPKSLDKL.

The protein belongs to the mab-21 family.

It is found in the nucleus. It localises to the cytoplasm. Required for normal development of the eye. May promote dorsalization of the developing embryo by antagonizing the ventralizing factor bmp4. Functional antagonism of bmp4 may require interaction with smad1. Required for gastrulation and subsequent neural development. May function as a transcriptional repressor. This is Protein mab-21-like 2-A (mab21l2-a) from Xenopus laevis (African clawed frog).